A 172-amino-acid polypeptide reads, in one-letter code: Translationally-controlled tumor protein (172 aa).

The TCTP domain maps to 1–172 (MIIYRDLISH…FKDGLEMEKC (172 aa)). Residue Ser46 is modified to Phosphoserine; by PLK1. The residue at position 53 (Ser53) is a Phosphoserine. Residue Ser64 is modified to Phosphoserine; by PLK1. The interval 70-172 (VDIVMNHHLQ…FKDGLEMEKC (103 aa)) is required for reduction of TSC22D1 protein stability.

It belongs to the TCTP family. Homodimer. Interacts with STEAP3. Interacts with TSC22D1; interaction results in the destabilization of TSC22D1 protein.

It is found in the cytoplasm. Involved in calcium binding and microtubule stabilization. Acts as a negative regulator of TSC22D1-mediated apoptosis, via interaction with and destabilization of TSC22D1 protein. The chain is Translationally-controlled tumor protein (TPT1) from Oryctolagus cuniculus (Rabbit).